Consider the following 467-residue polypeptide: Phytase A (467 aa).

The signal sequence occupies residues 1–23 (MGVSAVLLPLYLLAGVTSGLAVP). A glycan (N-linked (GlcNAc...) asparagine) is linked at asparagine 27. Cysteine 31 and cysteine 40 are joined by a disulfide. Residues glutamine 50 and tyrosine 51 each coordinate 1D-myo-inositol hexakisphosphate. N-linked (GlcNAc...) asparagine glycosylation is present at asparagine 59. 4 cysteine pairs are disulfide-bonded: cysteine 71/cysteine 414, cysteine 215/cysteine 465, cysteine 264/cysteine 282, and cysteine 436/cysteine 444. 4 residues coordinate 1D-myo-inositol hexakisphosphate: arginine 81, histidine 82, arginine 85, and threonine 88. Histidine 82 serves as the catalytic Nucleophile. N-linked (GlcNAc...) asparagine glycans are attached at residues asparagine 105 and asparagine 120. 1D-myo-inositol hexakisphosphate is bound at residue arginine 165. N-linked (GlcNAc...) asparagine glycosylation is found at asparagine 207 and asparagine 230. Lysine 301 is a binding site for 1D-myo-inositol hexakisphosphate. 2 N-linked (GlcNAc...) asparagine glycosylation sites follow: asparagine 339 and asparagine 352. 1D-myo-inositol hexakisphosphate is bound by residues histidine 361 and aspartate 362. Residues asparagine 376 and asparagine 388 are each glycosylated (N-linked (GlcNAc...) asparagine).

Belongs to the histidine acid phosphatase family. In terms of assembly, monomer.

The protein resides in the secreted. The catalysed reaction is 1D-myo-inositol hexakisphosphate + H2O = 1D-myo-inositol 1,2,4,5,6-pentakisphosphate + phosphate. It catalyses the reaction 1D-myo-inositol 1,2,4,5,6-pentakisphosphate + H2O = 1D-myo-inositol 1,2,5,6-tetrakisphosphate + phosphate. The enzyme catalyses 1D-myo-inositol 1,2,5,6-tetrakisphosphate + H2O = 1D-myo-inositol 1,2,6-trisphosphate + phosphate. It carries out the reaction 1D-myo-inositol 1,2,6-trisphosphate + H2O = 1D-myo-inositol 1,2-bisphosphate + phosphate. The catalysed reaction is 1D-myo-inositol 1,2-bisphosphate + H2O = 1D-myo-inositol 2-phosphate + phosphate. Its function is as follows. Catalyzes the phosphate monoester hydrolysis of phytic acid (myo-inositol hexakisphosphate), which results in the stepwise formation of myo-inositol pentakis-, tetrakis-, tris-, bis-, and monophosphates, as well as the liberation of inorganic phosphate. Myo-inositol 2-monophosphate is the end product. The sequence is that of Phytase A (phyA) from Aspergillus awamori (Black koji mold).